We begin with the raw amino-acid sequence, 201 residues long: Peptidyl-tRNA hydrolase (201 aa).

A tRNA-binding site is contributed by tyrosine 14. Residue histidine 19 is the Proton acceptor of the active site. Tyrosine 64, asparagine 66, and asparagine 112 together coordinate tRNA.

It belongs to the PTH family. In terms of assembly, monomer.

It is found in the cytoplasm. It carries out the reaction an N-acyl-L-alpha-aminoacyl-tRNA + H2O = an N-acyl-L-amino acid + a tRNA + H(+). Functionally, hydrolyzes ribosome-free peptidyl-tRNAs (with 1 or more amino acids incorporated), which drop off the ribosome during protein synthesis, or as a result of ribosome stalling. Its function is as follows. Catalyzes the release of premature peptidyl moieties from peptidyl-tRNA molecules trapped in stalled 50S ribosomal subunits, and thus maintains levels of free tRNAs and 50S ribosomes. This Rhodopseudomonas palustris (strain BisB18) protein is Peptidyl-tRNA hydrolase.